We begin with the raw amino-acid sequence, 316 residues long: MPREDRATWKSNYFMKIIQLLDDYPKCFVVGADNVGSKQMQQIRMSLRGKAVVLMGKNTMMRKAIRGHLENNPALEKLLPHIRGNVGFVFTKEDLTEIRDMLLANKVPAAARAGAIAPCDVTVPAQNTGLGPEKTSFFQALGITTKISRGTIEILSDVQLIKTGDKVGASEATLLNMLNISPFSFGLVIQQVFDNGSIYNPEVLDITEETLHKRFLEGVRNVASVCLQIGYPTIASVPHSIVNGYKRVLAVAVETDYTFPLAEKVKAFLADPSAFVAAAPVVVETAAPAAAAAPAKEAPKEESEESDEDMGFGLFD.

The segment at 289-316 (AAAAAPAKEAPKEESEESDEDMGFGLFD) is disordered.

This sequence belongs to the universal ribosomal protein uL10 family. As to quaternary structure, P0 forms a pentameric complex by interaction with dimers of P1 and P2. Phosphorylated.

It localises to the nucleus. The protein localises to the cytoplasm. In terms of biological role, ribosomal protein P0 is the functional equivalent of E.coli protein L10. The chain is Large ribosomal subunit protein uL10 (RPLP0) from Gallus gallus (Chicken).